A 454-amino-acid polypeptide reads, in one-letter code: tRNA modification GTPase MnmE (454 aa).

(6S)-5-formyl-5,6,7,8-tetrahydrofolate contacts are provided by Arg-23, Glu-80, and Lys-120. One can recognise a TrmE-type G domain in the interval 216 to 377; the sequence is GMKVVIAGRP…LRNHLKQSMG (162 aa). Asn-226 lines the K(+) pocket. Residues 226 to 231, 245 to 251, 270 to 273, 335 to 338, and 358 to 360 each bind GTP; these read NAGKSS, TDIAGTT, DTAG, NKAD, and SAR. Ser-230 is a Mg(2+) binding site. The K(+) site is built by Thr-245, Ile-247, and Thr-250. Residue Thr-251 participates in Mg(2+) binding. Lys-454 contributes to the (6S)-5-formyl-5,6,7,8-tetrahydrofolate binding site.

The protein belongs to the TRAFAC class TrmE-Era-EngA-EngB-Septin-like GTPase superfamily. TrmE GTPase family. In terms of assembly, homodimer. Heterotetramer of two MnmE and two MnmG subunits. K(+) is required as a cofactor.

The protein localises to the cytoplasm. Exhibits a very high intrinsic GTPase hydrolysis rate. Involved in the addition of a carboxymethylaminomethyl (cmnm) group at the wobble position (U34) of certain tRNAs, forming tRNA-cmnm(5)s(2)U34. This Klebsiella pneumoniae (strain 342) protein is tRNA modification GTPase MnmE.